The following is a 520-amino-acid chain: GMP synthase [glutamine-hydrolyzing] (520 aa).

The region spanning 12-205 is the Glutamine amidotransferase type-1 domain; it reads KIIVLDYGSQ…AISICGARGD (194 aa). Cys89 serves as the catalytic Nucleophile. Residues His179 and Glu181 contribute to the active site. The GMPS ATP-PPase domain maps to 206 to 395; it reads WSMDNFIDME…LGMPEEIVWR (190 aa). 233–239 is a binding site for ATP; the sequence is SGGVDSS.

In terms of assembly, homodimer.

It catalyses the reaction XMP + L-glutamine + ATP + H2O = GMP + L-glutamate + AMP + diphosphate + 2 H(+). The protein operates within purine metabolism; GMP biosynthesis; GMP from XMP (L-Gln route): step 1/1. Its function is as follows. Catalyzes the synthesis of GMP from XMP. This is GMP synthase [glutamine-hydrolyzing] from Streptococcus pyogenes serotype M2 (strain MGAS10270).